Consider the following 729-residue polypeptide: Phosphoribosylformylglycinamidine synthase subunit PurL (729 aa).

The active site involves H54. Residues Y57 and K96 each contribute to the ATP site. Position 98 (E98) interacts with Mg(2+). Residues 99 to 102 (SHNH) and R121 contribute to the substrate site. H100 serves as the catalytic Proton acceptor. D122 lines the Mg(2+) pocket. Q245 provides a ligand contact to substrate. Residue D273 coordinates Mg(2+). Substrate is bound at residue 317-319 (ETQ). The ATP site is built by D495 and G532. N533 serves as a coordination point for Mg(2+). S535 is a binding site for substrate.

Belongs to the FGAMS family. In terms of assembly, monomer. Part of the FGAM synthase complex composed of 1 PurL, 1 PurQ and 2 PurS subunits.

The protein resides in the cytoplasm. The enzyme catalyses N(2)-formyl-N(1)-(5-phospho-beta-D-ribosyl)glycinamide + L-glutamine + ATP + H2O = 2-formamido-N(1)-(5-O-phospho-beta-D-ribosyl)acetamidine + L-glutamate + ADP + phosphate + H(+). Its pathway is purine metabolism; IMP biosynthesis via de novo pathway; 5-amino-1-(5-phospho-D-ribosyl)imidazole from N(2)-formyl-N(1)-(5-phospho-D-ribosyl)glycinamide: step 1/2. Part of the phosphoribosylformylglycinamidine synthase complex involved in the purines biosynthetic pathway. Catalyzes the ATP-dependent conversion of formylglycinamide ribonucleotide (FGAR) and glutamine to yield formylglycinamidine ribonucleotide (FGAM) and glutamate. The FGAM synthase complex is composed of three subunits. PurQ produces an ammonia molecule by converting glutamine to glutamate. PurL transfers the ammonia molecule to FGAR to form FGAM in an ATP-dependent manner. PurS interacts with PurQ and PurL and is thought to assist in the transfer of the ammonia molecule from PurQ to PurL. This is Phosphoribosylformylglycinamidine synthase subunit PurL from Staphylococcus haemolyticus (strain JCSC1435).